The following is a 280-amino-acid chain: MTWKIVTDSGCDLRSLTRQSKELRFERVPLTLQIGTEIFRDDDGLDIDNMMTTMYQSSKATTSSCPSPEAFLQAYRGADNVIVMTITGTLSGSHNSARLAKNELLEENPNVNIHLIDSLSAGGEMDLLVLELERLIKLGLSFEEVVKQITAYQQKTRLIFVLAKVDNLVKNGRLSKLVGKVIGLLNIRMVGKASNKGTLELLQKARGQKKAVSALIEEIQKEGYVGGKVYIAHAQNPKICEQISEKIKSLYPDAVIQTGRTSGLCSFYAEDGGLLMGYEI.

One can recognise a DegV domain in the interval 3–280; that stretch reads WKIVTDSGCD…DGGLLMGYEI (278 aa). The hexadecanoate site is built by serine 63 and serine 91.

In terms of biological role, may bind long-chain fatty acids, such as palmitate, and may play a role in lipid transport or fatty acid metabolism. The polypeptide is DegV domain-containing protein SPy_1698/M5005_Spy1391 (Streptococcus pyogenes serotype M1).